Reading from the N-terminus, the 120-residue chain is Spermidine export protein MdtJ (120 aa).

4 helical membrane-spanning segments follow: residues 1-21, 31-51, 54-74, and 81-101; these read MFYW…TLSM, TGFI…SFAV, IALG…ITLF, and EALS…IALI.

This sequence belongs to the drug/metabolite transporter (DMT) superfamily. Small multidrug resistance (SMR) (TC 2.A.7.1) family. MdtJ subfamily. As to quaternary structure, forms a complex with MdtI.

Its subcellular location is the cell inner membrane. Its function is as follows. Catalyzes the excretion of spermidine. In Citrobacter koseri (strain ATCC BAA-895 / CDC 4225-83 / SGSC4696), this protein is Spermidine export protein MdtJ.